The following is a 471-amino-acid chain: U1 small nuclear ribonucleoprotein 70 kDa (471 aa).

A disordered region spans residues 48-78 (FEDPRDAPPPTRAETREERMERKRREKIERR). Residues 60-78 (AETREERMERKRREKIERR) show a composition bias toward basic and acidic residues. The interval 92–205 (HNDQNAQGDA…GGGLGGTRRG (114 aa)) is required for interaction with U1 RNA. An RRM domain is found at 103–184 (KTLFVARVNY…RRVLVDVERG (82 aa)). A disordered region spans residues 190-471 (WRPRRLGGGL…NGYMMEPPME (282 aa)). Gly residues predominate over residues 195 to 204 (LGGGLGGTRR). Residues 210-246 (NIRHSGRDDTSRYDERDRERERDRRERSREREKEPRE) are compositionally biased toward basic and acidic residues. Basic residues predominate over residues 247–261 (RRRSRSRERRRKSRS). A compositionally biased stretch (basic and acidic residues) spans 262–288 (REKEERKRTREKSKDKDKEKDKDNKDR). Residues 289–298 (DRKRRSRSRE) show a composition bias toward basic residues. Positions 299 to 316 (RKRERDRDREKKEERVEA) are enriched in basic and acidic residues. Residues 317 to 326 (EVPEADDAPQ) show a composition bias toward acidic residues. Basic and acidic residues predominate over residues 339–428 (IELKQEPEEK…RSEKREERVP (90 aa)).

As to quaternary structure, component of the U1 snRNP. The U1 snRNP is composed of the U1 snRNA and the 7 core Sm proteins snrpb, snrpd1, snrpd2, snrpd3, snrpe, snrpf and snrpg that assemble in a heptameric protein ring on the Sm site of the small nuclear RNA to form the core snRNP, and at least three U1 snRNP-specific proteins snrnp70/U1-70K, snrpa/U1-A and snrpc/U1-C.

It localises to the nucleus speckle. The protein resides in the nucleus. The protein localises to the nucleoplasm. Component of the spliceosomal U1 snRNP, which is essential for recognition of the pre-mRNA 5' splice-site and the subsequent assembly of the spliceosome. snrnp70 binds to the loop I region of U1-snRNA. This is U1 small nuclear ribonucleoprotein 70 kDa (snrnp70) from Xenopus laevis (African clawed frog).